The sequence spans 388 residues: Angiopoietin-related protein 5 (388 aa).

An N-terminal signal peptide occupies residues 1–25 (MMSPSQASLLFLNVCIFICGEAVQG). Residue asparagine 53 is glycosylated (N-linked (GlcNAc...) asparagine). Positions 98 to 123 (LRNMMDEQQASLDYLSNQVNELMNRV) form a coiled coil. Positions 141-383 (RPVQSHGLDC…SVSMKIRRMY (243 aa)) constitute a Fibrinogen C-terminal domain. Residue asparagine 238 is glycosylated (N-linked (GlcNAc...) asparagine). 2 disulfides stabilise this stretch: cysteine 310/cysteine 314 and cysteine 324/cysteine 338. N-linked (GlcNAc...) asparagine glycosylation occurs at asparagine 329.

As to expression, mainly expressed in adult heart.

It localises to the secreted. This chain is Angiopoietin-related protein 5 (ANGPTL5), found in Homo sapiens (Human).